The sequence spans 116 residues: MGLPKEHRLKHWRDFKTIYSQGKRFRGDALAIILLPQPAAPTKIGISISRKVSKKAVVRNLIKRRIRHACRTLLPQIQPGWHIVIAVRYNARECEYEHFLQELKRLLIQAEVFHGH.

This sequence belongs to the RnpA family. Consists of a catalytic RNA component (M1 or rnpB) and a protein subunit.

It carries out the reaction Endonucleolytic cleavage of RNA, removing 5'-extranucleotides from tRNA precursor.. Its function is as follows. RNaseP catalyzes the removal of the 5'-leader sequence from pre-tRNA to produce the mature 5'-terminus. It can also cleave other RNA substrates such as 4.5S RNA. The protein component plays an auxiliary but essential role in vivo by binding to the 5'-leader sequence and broadening the substrate specificity of the ribozyme. The chain is Ribonuclease P protein component from Picosynechococcus sp. (strain ATCC 27264 / PCC 7002 / PR-6) (Agmenellum quadruplicatum).